A 25-amino-acid polypeptide reads, in one-letter code: M-poneritoxin-Nc2a (25 aa).

It belongs to the ponericin-L family. Expressed by the venom gland.

The protein localises to the secreted. It localises to the target cell membrane. Its function is as follows. Membrane-perturbating peptide with multiple activities. It is insecticidal, since it induces reversible paralysis in insects (L.cuprina) after 1 hour, but fails to kill them. It shows moderate antibacterial activity against some Gram-positive and Gram-negative bacteria. It is also antiparasitic, since it moderately inhibits the larval development of the major pathogenic nematode of ruminants (H.contortus, IC(50)=23.2 uM), but fails to reduce the motility of adult males of the other nematode B.malayi. It also shows moderate cytotoxic activity against HEK293 cells (EC(50)=48-57 uM) but does not induce hemolysis in human erythrocytes. It also causes a moderate increase in intracellular calcium concentration on neuronal and epithelial cell lines, which supports a non-specific membrane perturbation mechanism of action. The chain is M-poneritoxin-Nc2a from Neoponera commutata (Large hunting ant).